Consider the following 206-residue polypeptide: FMN-dependent NADH:quinone oxidoreductase (206 aa).

FMN-binding positions include 15-17 (SVS), 94-97 (MYNF), and 138-141 (TRGG).

The protein belongs to the azoreductase type 1 family. In terms of assembly, homodimer. Requires FMN as cofactor.

The catalysed reaction is 2 a quinone + NADH + H(+) = 2 a 1,4-benzosemiquinone + NAD(+). It catalyses the reaction N,N-dimethyl-1,4-phenylenediamine + anthranilate + 2 NAD(+) = 2-(4-dimethylaminophenyl)diazenylbenzoate + 2 NADH + 2 H(+). Its function is as follows. Quinone reductase that provides resistance to thiol-specific stress caused by electrophilic quinones. Also exhibits azoreductase activity. Catalyzes the reductive cleavage of the azo bond in aromatic azo compounds to the corresponding amines. This chain is FMN-dependent NADH:quinone oxidoreductase, found in Sinorhizobium medicae (strain WSM419) (Ensifer medicae).